The following is a 186-amino-acid chain: Peptidyl-tRNA hydrolase (186 aa).

Tyrosine 14 contributes to the tRNA binding site. Histidine 19 serves as the catalytic Proton acceptor. 3 residues coordinate tRNA: phenylalanine 65, asparagine 67, and asparagine 113.

It belongs to the PTH family. As to quaternary structure, monomer.

Its subcellular location is the cytoplasm. It carries out the reaction an N-acyl-L-alpha-aminoacyl-tRNA + H2O = an N-acyl-L-amino acid + a tRNA + H(+). Functionally, hydrolyzes ribosome-free peptidyl-tRNAs (with 1 or more amino acids incorporated), which drop off the ribosome during protein synthesis, or as a result of ribosome stalling. In terms of biological role, catalyzes the release of premature peptidyl moieties from peptidyl-tRNA molecules trapped in stalled 50S ribosomal subunits, and thus maintains levels of free tRNAs and 50S ribosomes. The chain is Peptidyl-tRNA hydrolase from Limosilactobacillus fermentum (strain NBRC 3956 / LMG 18251) (Lactobacillus fermentum).